The primary structure comprises 718 residues: Myeloperoxidase (718 aa).

A signal peptide spans methionine 1–alanine 15. A propeptide spanning residues methionine 16–arginine 138 is cleaved from the precursor. A glycan (N-linked (GlcNAc...) asparagine) is linked at asparagine 113. Cysteine 141 and cysteine 154 form a disulfide bridge. Aspartate 234 lines the heme b pocket. Histidine 235 (proton acceptor) is an active-site residue. A Ca(2+)-binding site is contributed by aspartate 236. Cystine bridges form between cysteine 255-cysteine 265 and cysteine 259-cysteine 283. Cysteine 290 bears the Cysteine sulfenic acid (-SOH) mark. N-linked (GlcNAc...) asparagine glycosylation is present at asparagine 297. 4 residues coordinate Ca(2+): threonine 308, phenylalanine 310, aspartate 312, and serine 314. Asparagine 329 and asparagine 365 each carry an N-linked (GlcNAc...) asparagine glycan. The cysteines at positions 361 and 372 are disulfide-linked. Heme b contacts are provided by glutamate 382 and methionine 383. Asparagine 457 is a glycosylation site (N-linked (GlcNAc...) asparagine). Histidine 476 serves as a coordination point for heme b. Cystine bridges form between cysteine 580–cysteine 637 and cysteine 678–cysteine 704. The N-linked (GlcNAc...) asparagine glycan is linked to asparagine 711.

The protein belongs to the peroxidase family. XPO subfamily. In terms of assembly, homodimer; disulfide-linked. Each monomer consists of a light and a heavy chain. Found in a complex with CP and LTF; interacts directly with CP, which protects CP antioxidant properties by MPO. The cofactor is Ca(2+). Heme b serves as cofactor.

Its subcellular location is the lysosome. It catalyses the reaction chloride + H2O2 + H(+) = hypochlorous acid + H2O. Its function is as follows. Part of the host defense system of polymorphonuclear leukocytes. It is responsible for microbicidal activity against a wide range of organisms. In the stimulated PMN, MPO catalyzes the production of hypohalous acids, primarily hypochlorous acid in physiologic situations, and other toxic intermediates that greatly enhance PMN microbicidal activity. Mediates the proteolytic cleavage of alpha-1-microglobulin to form t-alpha-1-microglobulin, which potently inhibits oxidation of low density lipoprotein particles and limits vascular damage. This is Myeloperoxidase (Mpo) from Mus musculus (Mouse).